The chain runs to 385 residues: 8-amino-7-oxononanoate synthase (385 aa).

R21 lines the substrate pocket. 108–109 serves as a coordination point for pyridoxal 5'-phosphate; it reads GF. H133 is a binding site for substrate. Residues S179, H207, and T233 each contribute to the pyridoxal 5'-phosphate site. The residue at position 236 (K236) is an N6-(pyridoxal phosphate)lysine. Substrate is bound at residue T352.

It belongs to the class-II pyridoxal-phosphate-dependent aminotransferase family. BioF subfamily. In terms of assembly, homodimer. Pyridoxal 5'-phosphate is required as a cofactor.

The enzyme catalyses 6-carboxyhexanoyl-[ACP] + L-alanine + H(+) = (8S)-8-amino-7-oxononanoate + holo-[ACP] + CO2. It functions in the pathway cofactor biosynthesis; biotin biosynthesis. In terms of biological role, catalyzes the decarboxylative condensation of pimeloyl-[acyl-carrier protein] and L-alanine to produce 8-amino-7-oxononanoate (AON), [acyl-carrier protein], and carbon dioxide. This chain is 8-amino-7-oxononanoate synthase, found in Salmonella dublin (strain CT_02021853).